A 956-amino-acid chain; its full sequence is MDKEKIVIQGARAHNLKNIDVEIPRDKLVVMTGLSGSGKSSLAFDTIYAEGQRRYVESLSAYARQFLGQMDKPDVDLIEGLSPAISIDQKTTSRNPRSTVGTVTEIHDYLRLLYARVGHPVCPNHGIEITSQTIEQMVDRVLEYPEKTRIQIMAPIVSGKKGTHKKTIEEIKKEGYVRIRVDGEIYDINDEIEIEKNKKHSIEIIIDRIVIKEGINTRLYDSIEAALRLADGYAVVEIMGDKELLFSEHYACPYCGFSVGELEPRMFSFNSPFGACPTCDGLGTKLEVDVDTVIPDRSLTLNEGAIVPWRPISSQYYPQMLASACKEFGIDMDTPIEELSKEALDIVLNGSKDKEFYFEYKNDFGMTRETWIPFEGILPNIERRYRETNSDFTRDQMAQYMTDLPCPSCKGYRLKEETLSVKVNNHHIGQISEFSINEALDFFDSLELSEKETQIAAPIFKEVRARLGFLKNVGLDYLTMSRAAGTLSGGEAQRIRLATQIGSRLTGVLYILDEPSIGLHQRDNDRLINTLQSMRDIGNTLIVVEHDEDTMMAADYLIDIGPGAGEHGGRIVAAGTPEEVAKNKNSITGDYLSGKKFIPVPAKRRKGNGLELEIVGAKANNLKNVNAKIPLATFSCVTGVSGSGKSSLVNEVLRKALARKLNRNHAKPGEHKEIKGIENLEKIINIDQSPIGRTPRSNPATYTGAFDDIRDLFASTNEAKVRGYKKGRFSFNVKGGRCEACKGDGIIKIEMHFLPDVYVPCEVCHGKRYNGETLDIRYKGKNIAEVLEMTVEEGLEYFTNQPRIARKLQTIVDVGLGYIRLGQPATTLSGGEAQRVKLASELHKRSNGKSFYILDEPTTGLHADDIGRLLKVLQRLVEENGDTVLVIEHNLDVIKQADYLIDLGPEGGDGGGQIIATGTPEKIARSKKSYTGKYLKPILERDKERTEERIATAKKK.

33-40 provides a ligand contact to ATP; the sequence is GLSGSGKS. The segment at 252 to 279 adopts a C4-type zinc-finger fold; that stretch reads CPYCGFSVGELEPRMFSFNSPFGACPTC. 2 ABC transporter domains span residues 309 to 587 and 607 to 936; these read WRPI…KNSI and GNGL…KYLK. Residue 639–646 participates in ATP binding; sequence GVSGSGKS. The C4-type zinc-finger motif lies at 738–764; that stretch reads CEACKGDGIIKIEMHFLPDVYVPCEVC.

Belongs to the ABC transporter superfamily. UvrA family. As to quaternary structure, forms a heterotetramer with UvrB during the search for lesions.

It is found in the cytoplasm. The UvrABC repair system catalyzes the recognition and processing of DNA lesions. UvrA is an ATPase and a DNA-binding protein. A damage recognition complex composed of 2 UvrA and 2 UvrB subunits scans DNA for abnormalities. When the presence of a lesion has been verified by UvrB, the UvrA molecules dissociate. This is UvrABC system protein A from Listeria innocua serovar 6a (strain ATCC BAA-680 / CLIP 11262).